A 201-amino-acid chain; its full sequence is Desiccation-related protein PCC3-06 (201 aa).

Residues threonine 41–glutamate 54 show a composition bias toward polar residues. Disordered stretches follow at residues threonine 41 to lysine 155 and methionine 177 to phenylalanine 201. Basic and acidic residues-rich tracts occupy residues glutamate 57 to glutamate 76, glycine 108 to alanine 144, and methionine 177 to lysine 193.

This sequence belongs to the LEA type 1 family.

This Craterostigma plantagineum (Blue gem) protein is Desiccation-related protein PCC3-06.